The chain runs to 545 residues: CTP synthase (545 aa).

The interval 1–266 (MTTNYIFVTG…DDYICKRFSL (266 aa)) is amidoligase domain. S14 is a binding site for CTP. S14 contributes to the UTP binding site. ATP contacts are provided by residues 15–20 (SLGKGI) and D72. Residues D72 and E140 each contribute to the Mg(2+) site. Residues 147 to 149 (DIE), 187 to 192 (KTKPTQ), and K223 contribute to the CTP site. UTP is bound by residues 187-192 (KTKPTQ) and K223. 239–241 (KDV) lines the ATP pocket. Residues 291–542 (TIGMVGKYIE…VKAANEHQKR (252 aa)) enclose the Glutamine amidotransferase type-1 domain. L-glutamine is bound at residue G352. Catalysis depends on C379, which acts as the Nucleophile; for glutamine hydrolysis. Residues 380–383 (LGMQ), E403, and R470 each bind L-glutamine. Catalysis depends on residues H515 and E517.

This sequence belongs to the CTP synthase family. In terms of assembly, homotetramer.

It catalyses the reaction UTP + L-glutamine + ATP + H2O = CTP + L-glutamate + ADP + phosphate + 2 H(+). The catalysed reaction is L-glutamine + H2O = L-glutamate + NH4(+). It carries out the reaction UTP + NH4(+) + ATP = CTP + ADP + phosphate + 2 H(+). It participates in pyrimidine metabolism; CTP biosynthesis via de novo pathway; CTP from UDP: step 2/2. With respect to regulation, allosterically activated by GTP, when glutamine is the substrate; GTP has no effect on the reaction when ammonia is the substrate. The allosteric effector GTP functions by stabilizing the protein conformation that binds the tetrahedral intermediate(s) formed during glutamine hydrolysis. Inhibited by the product CTP, via allosteric rather than competitive inhibition. In terms of biological role, catalyzes the ATP-dependent amination of UTP to CTP with either L-glutamine or ammonia as the source of nitrogen. Regulates intracellular CTP levels through interactions with the four ribonucleotide triphosphates. The polypeptide is CTP synthase (Salmonella paratyphi A (strain ATCC 9150 / SARB42)).